The chain runs to 610 residues: Ectonucleoside triphosphate diphosphohydrolase 7 (610 aa).

The Cytoplasmic segment spans residues 1–28 (MARISFSCLFPASWHCSLPSVTQFSRQR). A helical membrane pass occupies residues 29–49 (VALLIISVAVFILVFAAVADL). Residues 50–555 (QLWSSRAFRD…VSWFRISFVY (506 aa)) lie on the Vesicular side of the membrane. The active-site Proton acceptor is the Glu217. N-linked (GlcNAc...) asparagine glycans are attached at residues Asn336 and Asn400. Cys454 and Cys483 are oxidised to a cystine. Residues 556 to 576 (NHYLFFACILVVLLSIVLYIL) form a helical membrane-spanning segment. Over 577–610 (RLRRIHRRQARASALDLLLMEEGVHTVLEPGIPT) the chain is Cytoplasmic.

The protein belongs to the GDA1/CD39 NTPase family. Requires Ca(2+) as cofactor. It depends on Mg(2+) as a cofactor.

It localises to the cytoplasmic vesicle membrane. It catalyses the reaction a ribonucleoside 5'-triphosphate + H2O = a ribonucleoside 5'-diphosphate + phosphate + H(+). It carries out the reaction UTP + H2O = UDP + phosphate + H(+). The catalysed reaction is GTP + H2O = GDP + phosphate + H(+). The enzyme catalyses CTP + H2O = CDP + phosphate + H(+). Its function is as follows. Catalyzes the hydrolysis of nucleoside triphosphates and diphosphates in a calcium- or magnesium-dependent manner. Preferentially hydrolyzes nucleoside 5'-triphosphates, with substrate preference for UTP &gt; GTP &gt; CTP. Hydrolyzes ATP and nucleoside diphosphates only to a minor extent. In Xenopus tropicalis (Western clawed frog), this protein is Ectonucleoside triphosphate diphosphohydrolase 7 (entpd7).